Reading from the N-terminus, the 345-residue chain is Uroporphyrinogen decarboxylase (345 aa).

Substrate-binding positions include 27-31 (RQAGR), Phe-46, Asp-76, Tyr-152, Ser-207, and His-320.

This sequence belongs to the uroporphyrinogen decarboxylase family. In terms of assembly, homodimer.

The protein localises to the cytoplasm. It carries out the reaction uroporphyrinogen III + 4 H(+) = coproporphyrinogen III + 4 CO2. Its pathway is porphyrin-containing compound metabolism; protoporphyrin-IX biosynthesis; coproporphyrinogen-III from 5-aminolevulinate: step 4/4. In terms of biological role, catalyzes the decarboxylation of four acetate groups of uroporphyrinogen-III to yield coproporphyrinogen-III. The sequence is that of Uroporphyrinogen decarboxylase from Oceanobacillus iheyensis (strain DSM 14371 / CIP 107618 / JCM 11309 / KCTC 3954 / HTE831).